We begin with the raw amino-acid sequence, 443 residues long: ATP-dependent protease ATPase subunit HslU (443 aa).

Residues isoleucine 18, 60–65 (GVGKTE), aspartate 256, glutamate 321, and arginine 393 contribute to the ATP site.

It belongs to the ClpX chaperone family. HslU subfamily. A double ring-shaped homohexamer of HslV is capped on each side by a ring-shaped HslU homohexamer. The assembly of the HslU/HslV complex is dependent on binding of ATP.

Its subcellular location is the cytoplasm. ATPase subunit of a proteasome-like degradation complex; this subunit has chaperone activity. The binding of ATP and its subsequent hydrolysis by HslU are essential for unfolding of protein substrates subsequently hydrolyzed by HslV. HslU recognizes the N-terminal part of its protein substrates and unfolds these before they are guided to HslV for hydrolysis. This Edwardsiella ictaluri (strain 93-146) protein is ATP-dependent protease ATPase subunit HslU.